Consider the following 200-residue polypeptide: Recombination protein RecR (200 aa).

The segment at Cys-57–Cys-72 adopts a C4-type zinc-finger fold. The 96-residue stretch at Thr-80 to Pro-175 folds into the Toprim domain.

The protein belongs to the RecR family.

May play a role in DNA repair. It seems to be involved in an RecBC-independent recombinational process of DNA repair. It may act with RecF and RecO. This Pseudomonas putida (strain W619) protein is Recombination protein RecR.